Here is a 974-residue protein sequence, read N- to C-terminus: Ovochymase-2 (974 aa).

The first 21 residues, 1 to 21 (MAETSIFPIMMLTVMIGVGRG), serve as a signal peptide directing secretion. A propeptide spans 22 to 49 (VTDSPGRVSRCGERPAANTSVSYGLLSR) (activation peptide). The N-linked (GlcNAc...) asparagine glycan is linked to N39. In terms of domain architecture, Peptidase S1 1 spans 50 to 299 (IVGGTSAVKG…LLNWLSENLN (250 aa)). The cysteines at positions 75 and 91 are disulfide-linked. H90 serves as the catalytic Charge relay system. V112 and E117 together coordinate Ca(2+). D140 serves as the catalytic Charge relay system. Intrachain disulfides connect C174–C244, C205–C223, C234–C263, C312–C342, C369–C388, C435–C462, C489–C510, C615–C631, C713–C776, C741–C754, and C766–C795. The active-site Charge relay system is S238. 2 consecutive CUB domains span residues 312–425 (CSTN…YEAV) and 435–547 (CGSV…ISFV). The region spanning 590 to 819 (LIKAEEAMPN…FIPWIMETIL (230 aa)) is the Peptidase S1 2 domain. Residues 590–974 (LIKAEEAMPN…WLSYSFHNQN (385 aa)) constitute a propeptide, activation peptide. N-linked (GlcNAc...) asparagine glycosylation occurs at N763. The segment at 830–858 (EPHHPLFPPDKPSQQKALLPDSPPSSSSQ) is disordered. A glycan (N-linked (GlcNAc...) asparagine) is linked at N926.

This sequence belongs to the peptidase S1 family. The catalytically inactive 107 kDa form is processed both N- and C-terminally to give rise to the 66 kDa catalytically active form and inactive forms of 82 kDa and 59 kDa. In terms of tissue distribution, expressed specifically in the cells lining the bottom of epithelial folds in the oviductal pars recta.

Its subcellular location is the secreted. The catalysed reaction is Preferential cleavage at 371-Gly-Ser-Arg-|-Trp-374 of glycoprotein gp43 in Xenopus laevis coelemic egg envelope to yield gp41.. Mediates gamete interaction by affecting the vitelline coat. This chain is Ovochymase-2 (OVCH2), found in Bufo japonicus (Japanese common toad).